Reading from the N-terminus, the 421-residue chain is PDZ and LIM domain protein 7 (421 aa).

The PDZ domain maps to methionine 1–alanine 85. Positions isoleucine 115–tryptophan 193 are disordered. Residues tyrosine 147–lysine 172 are compositionally biased toward polar residues. 3 consecutive LIM zinc-binding domains span residues proline 244 to alanine 302, proline 303 to threonine 362, and lysine 363 to valine 421.

Its subcellular location is the cytoplasm. It localises to the cytoskeleton. In terms of biological role, may function as a scaffold on which the coordinated assembly of proteins can occur. May play a role as an adapter that, via its PDZ domain, localizes LIM-binding proteins to actin filaments of both skeletal muscle and nonmuscle tissues. This Xenopus laevis (African clawed frog) protein is PDZ and LIM domain protein 7 (pdlim7).